A 551-amino-acid polypeptide reads, in one-letter code: Adenine deaminase (551 aa).

It belongs to the metallo-dependent hydrolases superfamily. Adenine deaminase family. It depends on Mn(2+) as a cofactor.

The catalysed reaction is adenine + H2O + H(+) = hypoxanthine + NH4(+). The polypeptide is Adenine deaminase (Leuconostoc citreum (strain KM20)).